Reading from the N-terminus, the 359-residue chain is Dual-specificity RNA methyltransferase RlmN (359 aa).

Catalysis depends on Glu-98, which acts as the Proton acceptor. The Radical SAM core domain occupies 104–329 (EPKRGTLCIS…LEHGLTATIR (226 aa)). A disulfide bridge links Cys-111 with Cys-340. Cys-118, Cys-122, and Cys-125 together coordinate [4Fe-4S] cluster. S-adenosyl-L-methionine contacts are provided by residues 166 to 167 (GE), Ser-198, 220 to 222 (SLH), and Asn-297. Cys-340 functions as the S-methylcysteine intermediate in the catalytic mechanism.

It belongs to the radical SAM superfamily. RlmN family. It depends on [4Fe-4S] cluster as a cofactor.

Its subcellular location is the cytoplasm. It carries out the reaction adenosine(2503) in 23S rRNA + 2 reduced [2Fe-2S]-[ferredoxin] + 2 S-adenosyl-L-methionine = 2-methyladenosine(2503) in 23S rRNA + 5'-deoxyadenosine + L-methionine + 2 oxidized [2Fe-2S]-[ferredoxin] + S-adenosyl-L-homocysteine. The catalysed reaction is adenosine(37) in tRNA + 2 reduced [2Fe-2S]-[ferredoxin] + 2 S-adenosyl-L-methionine = 2-methyladenosine(37) in tRNA + 5'-deoxyadenosine + L-methionine + 2 oxidized [2Fe-2S]-[ferredoxin] + S-adenosyl-L-homocysteine. Functionally, specifically methylates position 2 of adenine 2503 in 23S rRNA and position 2 of adenine 37 in tRNAs. m2A2503 modification seems to play a crucial role in the proofreading step occurring at the peptidyl transferase center and thus would serve to optimize ribosomal fidelity. This is Dual-specificity RNA methyltransferase RlmN from Halorhodospira halophila (strain DSM 244 / SL1) (Ectothiorhodospira halophila (strain DSM 244 / SL1)).